A 404-amino-acid polypeptide reads, in one-letter code: Formate-dependent phosphoribosylglycinamide formyltransferase (404 aa).

Residues E25 to L26 and E85 contribute to the N(1)-(5-phospho-beta-D-ribosyl)glycinamide site. Residues R118, K159, S164–Q169, E199–I202, and E207 each bind ATP. One can recognise an ATP-grasp domain in the interval R123 to L318. The Mg(2+) site is built by E277 and E289. Residues D296, K365, and R372–R373 contribute to the N(1)-(5-phospho-beta-D-ribosyl)glycinamide site.

This sequence belongs to the PurK/PurT family. In terms of assembly, homodimer.

The catalysed reaction is N(1)-(5-phospho-beta-D-ribosyl)glycinamide + formate + ATP = N(2)-formyl-N(1)-(5-phospho-beta-D-ribosyl)glycinamide + ADP + phosphate + H(+). It participates in purine metabolism; IMP biosynthesis via de novo pathway; N(2)-formyl-N(1)-(5-phospho-D-ribosyl)glycinamide from N(1)-(5-phospho-D-ribosyl)glycinamide (formate route): step 1/1. Its function is as follows. Involved in the de novo purine biosynthesis. Catalyzes the transfer of formate to 5-phospho-ribosyl-glycinamide (GAR), producing 5-phospho-ribosyl-N-formylglycinamide (FGAR). Formate is provided by PurU via hydrolysis of 10-formyl-tetrahydrofolate. The protein is Formate-dependent phosphoribosylglycinamide formyltransferase of Burkholderia pseudomallei (strain 1106a).